We begin with the raw amino-acid sequence, 759 residues long: Subtilisin-like protease SBT3.16 (759 aa).

The N-terminal stretch at 1–33 (MELSSLIVPNNKKHFVVVFIGLVLIFKIALITA) is a signal peptide. The propeptide at 34-119 (ANEKSQIYTV…VTRSKNMKLK (86 aa)) is activation peptide. Positions 41–118 (YTVHLGERQH…RVTRSKNMKL (78 aa)) constitute an Inhibitor I9 domain. Residues 124–608 (SDYLGLTSAA…GGLVNPVKVA (485 aa)) form the Peptidase S8 domain. The active-site Charge relay system is D153. Residues N186 and N209 are each glycosylated (N-linked (GlcNAc...) asparagine). Catalysis depends on H229, which acts as the Charge relay system. N371 carries an N-linked (GlcNAc...) asparagine glycan. S539 (charge relay system) is an active-site residue. Residues N632 and N711 are each glycosylated (N-linked (GlcNAc...) asparagine).

This sequence belongs to the peptidase S8 family.

The protein resides in the secreted. The protein is Subtilisin-like protease SBT3.16 of Arabidopsis thaliana (Mouse-ear cress).